The sequence spans 182 residues: Hypoxanthine/guanine phosphoribosyltransferase (182 aa).

This sequence belongs to the purine/pyrimidine phosphoribosyltransferase family. Archaeal HPRT subfamily. Homodimer.

It localises to the cytoplasm. It catalyses the reaction IMP + diphosphate = hypoxanthine + 5-phospho-alpha-D-ribose 1-diphosphate. It carries out the reaction GMP + diphosphate = guanine + 5-phospho-alpha-D-ribose 1-diphosphate. It participates in purine metabolism; IMP biosynthesis via salvage pathway; IMP from hypoxanthine: step 1/1. Catalyzes a salvage reaction resulting in the formation of IMP that is energically less costly than de novo synthesis. This chain is Hypoxanthine/guanine phosphoribosyltransferase, found in Methanosphaerula palustris (strain ATCC BAA-1556 / DSM 19958 / E1-9c).